We begin with the raw amino-acid sequence, 221 residues long: Lactate racemization regulatory protein (221 aa).

The HTH crp-type domain maps to 139–213 (NGKKGAICAF…NHKFIIQDVS (75 aa)). The segment at residues 172-192 (NDDIAGFCGISSRSSVNRMLK) is a DNA-binding region (H-T-H motif).

Multimerizes on DNA. Multimerization is required for transcription activation.

With respect to regulation, L-lactate acts as a positive effector on the binding and multimerization of LarR on DNA, while D-lactate antagonizes the positive effect of L-lactate. Its function is as follows. Positive transcriptional regulator that is absolutely required for the expression of lactate racemase (Lar) activity. Controls Lar expression by sensing the L-/D-lactate ration. Binds to a 16-bp palindromic sequence (Lar box motif) that is present in the larR-larA intergenic region, allowing transcription of the larABCDE operon. The chain is Lactate racemization regulatory protein from Lactiplantibacillus plantarum (strain ATCC BAA-793 / NCIMB 8826 / WCFS1) (Lactobacillus plantarum).